The following is a 379-amino-acid chain: Epoxyqueuosine reductase (379 aa).

The active-site Proton donor is the D140. Residues 184-214 form the 4Fe-4S ferredoxin-type domain; the sequence is FEPDTPASDLCGSCNQCVKACPTGSLLGEGK. Positions 194, 197, 200, 204, 220, 246, 249, and 253 each coordinate [4Fe-4S] cluster. Residues 307-332 form an HEAT-like PBS-type repeat; that stretch reads QRNAIIILARYKDKTAVPDLIDCLQN.

The protein belongs to the QueG family. As to quaternary structure, monomer. The cofactor is cob(II)alamin. [4Fe-4S] cluster is required as a cofactor.

It localises to the cytoplasm. It carries out the reaction epoxyqueuosine(34) in tRNA + AH2 = queuosine(34) in tRNA + A + H2O. The protein operates within tRNA modification; tRNA-queuosine biosynthesis. Its function is as follows. Catalyzes the conversion of epoxyqueuosine (oQ) to queuosine (Q), which is a hypermodified base found in the wobble positions of tRNA(Asp), tRNA(Asn), tRNA(His) and tRNA(Tyr). The polypeptide is Epoxyqueuosine reductase (Listeria monocytogenes serovar 1/2a (strain ATCC BAA-679 / EGD-e)).